Reading from the N-terminus, the 715-residue chain is Fatty acid oxidation complex subunit alpha (715 aa).

Residues 1–190 (MTTTSAFMLN…KAGLVDDVVP (190 aa)) form an enoyl-CoA hydratase region. The segment at 306–715 (GPLNSVGILG…WTNGETDQGN (410 aa)) is 3-hydroxyacyl-CoA dehydrogenase.

It in the N-terminal section; belongs to the enoyl-CoA hydratase/isomerase family. This sequence in the central section; belongs to the 3-hydroxyacyl-CoA dehydrogenase family. Heterotetramer of two alpha chains (FadJ) and two beta chains (FadI).

It localises to the cytoplasm. It carries out the reaction a (3S)-3-hydroxyacyl-CoA = a (2E)-enoyl-CoA + H2O. The catalysed reaction is a 4-saturated-(3S)-3-hydroxyacyl-CoA = a (3E)-enoyl-CoA + H2O. The enzyme catalyses a (3S)-3-hydroxyacyl-CoA + NAD(+) = a 3-oxoacyl-CoA + NADH + H(+). It catalyses the reaction (3S)-3-hydroxybutanoyl-CoA = (3R)-3-hydroxybutanoyl-CoA. It functions in the pathway lipid metabolism; fatty acid beta-oxidation. In terms of biological role, catalyzes the formation of a hydroxyacyl-CoA by addition of water on enoyl-CoA. Also exhibits 3-hydroxyacyl-CoA epimerase and 3-hydroxyacyl-CoA dehydrogenase activities. In Salmonella gallinarum (strain 287/91 / NCTC 13346), this protein is Fatty acid oxidation complex subunit alpha.